The chain runs to 215 residues: Probable nicotinate-nucleotide adenylyltransferase (215 aa).

The protein belongs to the NadD family.

It catalyses the reaction nicotinate beta-D-ribonucleotide + ATP + H(+) = deamido-NAD(+) + diphosphate. It participates in cofactor biosynthesis; NAD(+) biosynthesis; deamido-NAD(+) from nicotinate D-ribonucleotide: step 1/1. In terms of biological role, catalyzes the reversible adenylation of nicotinate mononucleotide (NaMN) to nicotinic acid adenine dinucleotide (NaAD). The chain is Probable nicotinate-nucleotide adenylyltransferase from Coxiella burnetii (strain RSA 331 / Henzerling II).